The primary structure comprises 644 residues: Tubulin--tyrosine ligase-like protein 12 (644 aa).

Basic and acidic residues predominate over residues 1–13 (MEAERGPERRPAE). The disordered stretch occupies residues 1–25 (MEAERGPERRPAERSSPGQTPEEGA). Residues 300 to 644 (PHGHIFKVYT…PGGCHVTCLV (345 aa)) enclose the TTL domain. ATP contacts are provided by residues 450–453 (SKYI), Lys-468, and Asp-470.

Belongs to the tubulin--tyrosine ligase family. Interacts with MAVS; the interaction prevents MAVS binding to TBK1 and IKBKE. Interacts (via N-terminus) with TBK1 (via protein kinase domain). Interacts (via TTL domain) with IKBKE (via protein kinase domain). Interacts with tubulin alpha. Interacts with histone H3 and histone H4 (when trimethylated at 'Lys-20' (H4K20me3)). Interacts with CBX3. Expressed in the basal layer of prostate and endothelial cells. Increased expression in prostatic intraepithelial neoplasia and metastatic lesions.

The protein resides in the cytoplasm. The protein localises to the midbody. It is found in the cytoskeleton. Its subcellular location is the microtubule organizing center. It localises to the centrosome. The protein resides in the spindle. The protein localises to the nucleus. Functionally, negatively regulates post-translational modifications of tubulin, including detyrosination of the C-terminus and polyglutamylation of glutamate residues. Also, indirectly promotes histone H4 trimethylation at 'Lys-20' (H4K20me3). Probably by controlling tubulin and/or histone H4 post-translational modifications, plays a role in mitosis and in maintaining chromosome number stability. During RNA virus-mediated infection, acts as a negative regulator of the RIG-I pathway by preventing MAVS binding to TBK1 and IKBKE. The protein is Tubulin--tyrosine ligase-like protein 12 (TTLL12) of Homo sapiens (Human).